Reading from the N-terminus, the 264-residue chain is Thymidylate synthase (264 aa).

DUMP contacts are provided by residues Arg-21 and 126 to 127; that span reads RR. Residue Cys-146 is the Nucleophile of the active site. Residues 166–169, Asn-177, and 207–209 contribute to the dUMP site; these read RSAD and HLY. Asp-169 contributes to the (6R)-5,10-methylene-5,6,7,8-tetrahydrofolate binding site. Residue Ala-263 participates in (6R)-5,10-methylene-5,6,7,8-tetrahydrofolate binding.

This sequence belongs to the thymidylate synthase family. Bacterial-type ThyA subfamily. In terms of assembly, homodimer.

It is found in the cytoplasm. The enzyme catalyses dUMP + (6R)-5,10-methylene-5,6,7,8-tetrahydrofolate = 7,8-dihydrofolate + dTMP. It functions in the pathway pyrimidine metabolism; dTTP biosynthesis. Catalyzes the reductive methylation of 2'-deoxyuridine-5'-monophosphate (dUMP) to 2'-deoxythymidine-5'-monophosphate (dTMP) while utilizing 5,10-methylenetetrahydrofolate (mTHF) as the methyl donor and reductant in the reaction, yielding dihydrofolate (DHF) as a by-product. This enzymatic reaction provides an intracellular de novo source of dTMP, an essential precursor for DNA biosynthesis. The protein is Thymidylate synthase of Bradyrhizobium sp. (strain ORS 278).